The sequence spans 577 residues: Double-stranded RNA-binding protein Staufen homolog 1 (577 aa).

N-acetylserine is present on Ser-2. Polar residues predominate over residues 34 to 44; it reads SIPSTTSSLPS. Residues 34–55 form a disordered region; it reads SIPSTTSSLPSENAGRPIQNSA. In terms of domain architecture, DRBM 1 spans 72–162; the sequence is TPTVELNALC…AAKALRILQN (91 aa). Arg-108 carries the post-translational modification Asymmetric dimethylarginine. Residue Arg-115 is modified to Asymmetric dimethylarginine; alternate. Arg-115 is modified (omega-N-methylarginine; alternate). Ser-176 is subject to Phosphoserine. Residues 184 to 251 enclose the DRBM 2 domain; it reads SEISQVFEIA…AIAVLEELKK (68 aa). Ser-278 is subject to Phosphoserine. Positions 286-354 constitute a DRBM 3 domain; it reads NPISRLAQIQ…AENMLEILGF (69 aa). A disordered region spans residues 360–397; the sequence is QPTKPALKSEEKTPIKKPGDGRKVTFFEPGSGDENGTS. A compositionally biased stretch (basic and acidic residues) spans 366–384; sequence LKSEEKTPIKKPGDGRKVT. Ser-390 bears the Phosphoserine mark.

In terms of assembly, binds tubulin. Binds with low affinity single-stranded RNA or DNA homopolymers. Interacts with CASC3 in an RNA-dependent manner. Identified in a mRNP complex, at least composed of DHX9, DDX3X, ELAVL1, HNRNPU, IGF2BP1, ILF3, PABPC1, PCBP2, PTBP2, STAU1, STAU2, SYNCRIP and YBX1. As to quaternary structure, (Microbial infection) Interacts with HERV-K rec and gag proteins. (Microbial infection) Interacts with HIV-1 GAG polyprotein. In terms of assembly, (Microbial infection) Interacts with influenza virus NS1 protein. As to quaternary structure, (Microbial infection) Interacts with Ebola virus NP, VP30 and VP35. In terms of tissue distribution, widely expressed. Expressed in brain, pancreas, heart, skeletal muscles, liver, lung, kidney and placenta.

It is found in the cytoplasm. It localises to the rough endoplasmic reticulum. Binds double-stranded RNA (regardless of the sequence) and tubulin. May play a role in specific positioning of mRNAs at given sites in the cell by cross-linking cytoskeletal and RNA components, and in stimulating their translation at the site. Functionally, (Microbial infection) Plays a role in virus particles production of many viruses including of HIV-1, HERV-K, ebola virus and influenza virus. Acts by interacting with various viral proteins involved in particle budding process. The chain is Double-stranded RNA-binding protein Staufen homolog 1 (STAU1) from Homo sapiens (Human).